We begin with the raw amino-acid sequence, 218 residues long: 7-cyano-7-deazaguanine synthase (218 aa).

11–21 (LSGGMDSATLL) contributes to the ATP binding site. Zn(2+) is bound by residues C193, C201, C204, and C207.

The protein belongs to the QueC family. Requires Zn(2+) as cofactor.

It carries out the reaction 7-carboxy-7-deazaguanine + NH4(+) + ATP = 7-cyano-7-deazaguanine + ADP + phosphate + H2O + H(+). It functions in the pathway purine metabolism; 7-cyano-7-deazaguanine biosynthesis. Functionally, catalyzes the ATP-dependent conversion of 7-carboxy-7-deazaguanine (CDG) to 7-cyano-7-deazaguanine (preQ(0)). The protein is 7-cyano-7-deazaguanine synthase of Aquifex aeolicus (strain VF5).